A 187-amino-acid polypeptide reads, in one-letter code: UPF0340 protein SP_0663 (187 aa).

It belongs to the UPF0340 family.

The chain is UPF0340 protein SP_0663 from Streptococcus pneumoniae serotype 4 (strain ATCC BAA-334 / TIGR4).